The primary structure comprises 1358 residues: Mediator of RNA polymerase II transcription subunit 12 (1358 aa).

A coiled-coil region spans residues 629–654; the sequence is VRYNYEQLQIQLNTAKEQMLQEQFEH.

Belongs to the Mediator complex subunit 12 family. In terms of assembly, component of the SRB8-11 complex, which itself associates with the Mediator complex.

The protein localises to the nucleus. In terms of biological role, component of the SRB8-11 complex. The SRB8-11 complex is a regulatory module of the Mediator complex which is itself involved in regulation of basal and activated RNA polymerase II-dependent transcription. The SRB8-11 complex may be involved in the transcriptional repression of a subset of genes regulated by Mediator. It may inhibit the association of the Mediator complex with RNA polymerase II to form the holoenzyme complex. This is Mediator of RNA polymerase II transcription subunit 12 (SRB8) from Eremothecium gossypii (strain ATCC 10895 / CBS 109.51 / FGSC 9923 / NRRL Y-1056) (Yeast).